Here is a 449-residue protein sequence, read N- to C-terminus: Phosphoglucosamine mutase (449 aa).

Catalysis depends on Ser100, which acts as the Phosphoserine intermediate. Residues Ser100, Asp241, Asp243, and Asp245 each contribute to the Mg(2+) site. Ser100 carries the phosphoserine modification.

This sequence belongs to the phosphohexose mutase family. Mg(2+) is required as a cofactor. In terms of processing, activated by phosphorylation.

The enzyme catalyses alpha-D-glucosamine 1-phosphate = D-glucosamine 6-phosphate. Functionally, catalyzes the conversion of glucosamine-6-phosphate to glucosamine-1-phosphate. The sequence is that of Phosphoglucosamine mutase from Clostridium botulinum (strain 657 / Type Ba4).